The chain runs to 559 residues: Potassium-transporting ATPase potassium-binding subunit (559 aa).

A run of 12 helical transmembrane segments spans residues 5 to 25 (GFLLLASYLLVLLVLARPLGM), 63 to 83 (LLAILLFNALGGLALFALLML), 131 to 151 (VGLTVQNFLSAATGIAVVFAL), 173 to 193 (ITLWLLLPLSLLVALFFIQQG), 254 to 274 (VQMLAIFLIPTALCFAFGEVV), 282 to 302 (AILWAMTLIFILCVAVVMWAE), 327 to 347 (FGILASSLFAVITTAASCGAV), 356 to 376 (ALGGMVPMWLMQIGEVVFGGV), 379 to 399 (GLYGMLLFVMLAVFIAGLMVG), 416 to 436 (MIALAILVTPTLVLLGTALAM), 483 to 503 (LLLAFCMLVGRFAVIIPVMAI), and 525 to 545 (ALFIGLLIGTVLLVGALTFIP).

The protein belongs to the KdpA family. As to quaternary structure, the system is composed of three essential subunits: KdpA, KdpB and KdpC.

The protein resides in the cell inner membrane. In terms of biological role, part of the high-affinity ATP-driven potassium transport (or Kdp) system, which catalyzes the hydrolysis of ATP coupled with the electrogenic transport of potassium into the cytoplasm. This subunit binds the periplasmic potassium ions and delivers the ions to the membrane domain of KdpB through an intramembrane tunnel. The sequence is that of Potassium-transporting ATPase potassium-binding subunit from Klebsiella pneumoniae subsp. pneumoniae (strain ATCC 700721 / MGH 78578).